We begin with the raw amino-acid sequence, 955 residues long: Mediator of RNA polymerase II transcription subunit 16 (955 aa).

It belongs to the Mediator complex subunit 16 family. In terms of assembly, component of the Mediator complex.

The protein localises to the nucleus. Its function is as follows. Component of the Mediator complex, a coactivator involved in the regulated transcription of nearly all RNA polymerase II-dependent genes. Mediator functions as a bridge to convey information from gene-specific regulatory proteins to the basal RNA polymerase II transcription machinery. Mediator is recruited to promoters by direct interactions with regulatory proteins and serves as a scaffold for the assembly of a functional preinitiation complex with RNA polymerase II and the general transcription factors. The polypeptide is Mediator of RNA polymerase II transcription subunit 16 (sin4) (Neosartorya fischeri (strain ATCC 1020 / DSM 3700 / CBS 544.65 / FGSC A1164 / JCM 1740 / NRRL 181 / WB 181) (Aspergillus fischerianus)).